A 357-amino-acid chain; its full sequence is Uroporphyrinogen decarboxylase (357 aa).

Substrate contacts are provided by residues 30–34 (RQAGR), aspartate 79, tyrosine 154, serine 209, and histidine 336.

The protein belongs to the uroporphyrinogen decarboxylase family. As to quaternary structure, homodimer.

Its subcellular location is the cytoplasm. The enzyme catalyses uroporphyrinogen III + 4 H(+) = coproporphyrinogen III + 4 CO2. It functions in the pathway porphyrin-containing compound metabolism; protoporphyrin-IX biosynthesis; coproporphyrinogen-III from 5-aminolevulinate: step 4/4. Functionally, catalyzes the decarboxylation of four acetate groups of uroporphyrinogen-III to yield coproporphyrinogen-III. This chain is Uroporphyrinogen decarboxylase, found in Mycobacterium leprae (strain Br4923).